Reading from the N-terminus, the 44-residue chain is Photosystem I reaction center subunit IX (44 aa).

Residues 7–27 (YLSVAPVLSTLWFGALAGLLI) form a helical membrane-spanning segment.

Belongs to the PsaJ family.

The protein localises to the plastid. It is found in the chloroplast thylakoid membrane. Functionally, may help in the organization of the PsaE and PsaF subunits. The protein is Photosystem I reaction center subunit IX of Oryza nivara (Indian wild rice).